Consider the following 465-residue polypeptide: Lactaldehyde dehydrogenase (465 aa).

220-225 (GSVEVG) contacts NAD(+). Catalysis depends on residues glutamate 240 and cysteine 274.

This sequence belongs to the aldehyde dehydrogenase family. In terms of assembly, homotetramer.

It carries out the reaction (S)-lactaldehyde + NAD(+) + H2O = (S)-lactate + NADH + 2 H(+). The protein operates within cofactor biosynthesis; coenzyme F420 biosynthesis. Involved in F420 biosynthesis through the oxidation of lactaldehyde to lactate. In Methanococcus maripaludis (strain C5 / ATCC BAA-1333), this protein is Lactaldehyde dehydrogenase.